The following is a 236-amino-acid chain: Probable calcium-binding protein CML30 (236 aa).

The disordered stretch occupies residues 43–64 (VVVVAKKRPEEEPRRPDPDADL). Positions 49–60 (KRPEEEPRRPDP) are enriched in basic and acidic residues. 2 consecutive EF-hand domains span residues 59 to 94 (DPDA…LGIA) and 96 to 131 (SSAA…IPKR). Aspartate 72, aspartate 74, aspartate 76, glutamate 83, aspartate 109, asparagine 111, aspartate 113, and glutamate 120 together coordinate Ca(2+). The segment at 130 to 158 (KRRKSHQQHPLPSTAAADEEAAAADEEYE) is disordered. Over residues 146 to 158 (ADEEAAAADEEYE) the composition is skewed to acidic residues. 2 consecutive EF-hand domains span residues 161 to 196 (EEER…LGLR) and 202 to 236 (PAVA…VVKA). 9 residues coordinate Ca(2+): aspartate 174, asparagine 176, aspartate 178, glutamate 185, aspartate 215, aspartate 217, aspartate 219, methionine 221, and glutamate 226.

In terms of biological role, potential calcium sensor. This Oryza sativa subsp. japonica (Rice) protein is Probable calcium-binding protein CML30 (CML30).